The sequence spans 323 residues: Elongation factor P--(R)-beta-lysine ligase (323 aa).

74–76 serves as a coordination point for substrate; that stretch reads SPE. ATP-binding positions include 98–100 and asparagine 107; that span reads RNE. A substrate-binding site is contributed by tyrosine 116. 242–243 is a binding site for ATP; sequence EL. Residue glutamate 249 coordinates substrate. Glycine 298 provides a ligand contact to ATP.

Belongs to the class-II aminoacyl-tRNA synthetase family. EpmA subfamily. Homodimer.

The enzyme catalyses D-beta-lysine + L-lysyl-[protein] + ATP = N(6)-((3R)-3,6-diaminohexanoyl)-L-lysyl-[protein] + AMP + diphosphate + H(+). With EpmB is involved in the beta-lysylation step of the post-translational modification of translation elongation factor P (EF-P). Catalyzes the ATP-dependent activation of (R)-beta-lysine produced by EpmB, forming a lysyl-adenylate, from which the beta-lysyl moiety is then transferred to the epsilon-amino group of a conserved specific lysine residue in EF-P. In Photobacterium profundum (strain SS9), this protein is Elongation factor P--(R)-beta-lysine ligase.